We begin with the raw amino-acid sequence, 720 residues long: Transcriptional regulator EFH1 (720 aa).

2 stretches are compositionally biased toward polar residues: residues 1–15 (MNGIMTTSSHSNFYN) and 22–35 (PSSSDHIPGPSSQD). 4 disordered regions span residues 1 to 111 (MNGI…SSST), 181 to 223 (SFQM…HQSQ), 245 to 336 (QKEF…TIAT), and 365 to 437 (YQRQ…PQPD). Residues 71–105 (QQNQSESQQSRQSHHLQQQQQQQQQQQQNQHNQQN) show a composition bias toward low complexity. The span at 181-200 (SFQMGSVSTPDTQNSSIRSK) shows a compositional bias: polar residues. The segment covering 201-223 (QQQQHSYQQQQPQQLSQSQHQSQ) has biased composition (low complexity). The span at 254-266 (GDQTLVPQTNSKL) shows a compositional bias: polar residues. Low complexity predominate over residues 267 to 304 (QQQISETSYSQQQQQQQSPPTPQKQQQQQHYQHQTTQP). The span at 313-336 (YSQTGGPSSSPVAGNISIPTTIAT) shows a compositional bias: polar residues. Residues 366 to 399 (QRQQQQQQQHQQPQSQQMSQISQLSQQIPPQGSS) show a composition bias toward low complexity. The span at 400-413 (KNISINSTPTKSRA) shows a compositional bias: polar residues. Over residues 414–433 (SSITTRSGRQSRSTSISSFI) the composition is skewed to low complexity. An HTH APSES-type domain is found at 446–552 (KVATTRWDDE…KNIKQYFLTK (107 aa)). The H-T-H motif DNA-binding region spans 480-501 (GTKLLNVIGMTRGKRDGILKTE). Positions 569-582 (GMTRQREEVRREGR) are enriched in basic and acidic residues. The tract at residues 569–662 (GMTRQREEVR…KNSESKLLET (94 aa)) is disordered. The segment covering 613–644 (VPGDDEEEEDDDDDDDDDEEEGEQDDEEEEDG) has biased composition (acidic residues). Residues 645–654 (SSTSMSSSKN) are compositionally biased toward low complexity.

Belongs to the EFG1/PHD1/stuA family.

Its subcellular location is the nucleus. Its function is as follows. Transcription factor that regulates filamentous growth through repression of EFG1. Regulates the level of colonizing fungi, favoring commensalism as opposed to candidiasis. This chain is Transcriptional regulator EFH1 (EFH1), found in Candida albicans (strain SC5314 / ATCC MYA-2876) (Yeast).